The chain runs to 165 residues: MALAEADDGAVVFGEEQEALVLKSWAVMKKDAANLGLRFFLKVFEIAPSAEQMFSFLRDSDVPLEKNPKLKTHAMSVFVMTCEAAAQLRKAGKVTVRETTLKRLGATHLRYGVADGHFEVTGFALLETIKEALPADMWSLEMKKAWAEAYSQLVAAIKREMKPDA.

In terms of domain architecture, Globin spans valine 12–lysine 162. The short motif at glutamate 45–serine 49 is the Homodimerization element. Positions 55, 69, 73, 103, 107, and 108 each coordinate heme b. Residues aspartate 115–glutamate 127 carry the Homodimerization motif.

It belongs to the plant globin family. As to quaternary structure, homodimer. The cofactor is heme b. In embryonic organs and at low levels in vegetative organs.

It localises to the cytoplasm. The protein resides in the nucleus. It carries out the reaction Fe(III)-heme b-[protein] + nitric oxide + H2O = Fe(II)-heme b-[protein] + nitrite + 2 H(+). Functionally, phytoglobin that reduces nitrite to nitric oxide (NO) under anoxic conditions (e.g. during flooding or in waterlogged soil). May not function as an oxygen storage or transport protein. Has an unusually high affinity for O(2) through an hexacoordinate heme iron because of a very low dissociation constant. The chain is Anaerobic nitrite reductase GLB1 (HB) from Zea mays (Maize).